Reading from the N-terminus, the 360-residue chain is Glycerol-3-phosphate dehydrogenase [NAD(+)], cytoplasmic (360 aa).

NAD(+) is bound by residues 11–16 (GSGNWG), Phe-98, Lys-121, and Ala-155. Lys-121 serves as a coordination point for substrate. Lys-206 functions as the Proton acceptor in the catalytic mechanism. NAD(+) is bound by residues Arg-270 and Gln-299. Position 270 to 271 (270 to 271 (RN)) interacts with substrate.

The protein belongs to the NAD-dependent glycerol-3-phosphate dehydrogenase family. Homodimer.

Its subcellular location is the cytoplasm. It carries out the reaction sn-glycerol 3-phosphate + NAD(+) = dihydroxyacetone phosphate + NADH + H(+). The protein operates within phospholipid metabolism; alpha-glycerophosphate cycle. This chain is Glycerol-3-phosphate dehydrogenase [NAD(+)], cytoplasmic (Gpdh1), found in Drosophila kanekoi (Fruit fly).